A 394-amino-acid polypeptide reads, in one-letter code: Quinolinate synthase (394 aa).

Iminosuccinate-binding residues include histidine 57 and serine 74. Position 121 (cysteine 121) interacts with [4Fe-4S] cluster. Iminosuccinate contacts are provided by residues 153-155 (YMN) and serine 174. Residue cysteine 250 coordinates [4Fe-4S] cluster. Iminosuccinate-binding positions include 276–278 (HPE) and threonine 293. Position 340 (cysteine 340) interacts with [4Fe-4S] cluster.

Belongs to the quinolinate synthase family. Type 3 subfamily. The cofactor is [4Fe-4S] cluster.

The protein resides in the cytoplasm. The enzyme catalyses iminosuccinate + dihydroxyacetone phosphate = quinolinate + phosphate + 2 H2O + H(+). Its pathway is cofactor biosynthesis; NAD(+) biosynthesis; quinolinate from iminoaspartate: step 1/1. In terms of biological role, catalyzes the condensation of iminoaspartate with dihydroxyacetone phosphate to form quinolinate. In Nocardioides sp. (strain ATCC BAA-499 / JS614), this protein is Quinolinate synthase.